We begin with the raw amino-acid sequence, 75 residues long: Small ribosomal subunit protein bS18 (75 aa).

It belongs to the bacterial ribosomal protein bS18 family. Part of the 30S ribosomal subunit. Forms a tight heterodimer with protein bS6.

Its function is as follows. Binds as a heterodimer with protein bS6 to the central domain of the 16S rRNA, where it helps stabilize the platform of the 30S subunit. In Glaesserella parasuis serovar 5 (strain SH0165) (Haemophilus parasuis), this protein is Small ribosomal subunit protein bS18.